Consider the following 561-residue polypeptide: ATP-dependent RNA helicase MRH4, mitochondrial (561 aa).

A mitochondrion-targeting transit peptide spans 1 to 26 (MSLFFKPVISPQWSFPVLLKIGVRSY). The tract at residues 29 to 72 (GPRTKHKGNSPLASVPTGSSNKNRKQKAKGKKGNKKNDPDQAFN) is disordered. Over residues 50-62 (KNRKQKAKGKKGN) the composition is skewed to basic residues. Positions 98 to 129 (SNFDQLLILPPVRDAVKEIISKESLKLQDSRK) match the Q motif motif. A Helicase ATP-binding domain is found at 131-319 (TSENIIPSPI…NINHLIFCSA (189 aa)). 144–151 (AIKRISKN) lines the ATP pocket. The short motif at 267-270 (SIRM) is the DEAD box element. The Helicase C-terminal domain occupies 350-539 (ALDFKVINSA…KQGGRVFMLT (190 aa)).

This sequence belongs to the DEAD box helicase family. MRH4 subfamily.

It is found in the mitochondrion. It catalyses the reaction ATP + H2O = ADP + phosphate + H(+). In terms of biological role, ATP-binding RNA helicase involved in mitochondrial RNA metabolism. Required for maintenance of mitochondrial DNA. The chain is ATP-dependent RNA helicase MRH4, mitochondrial (MRH4) from Saccharomyces cerevisiae (strain YJM789) (Baker's yeast).